The sequence spans 285 residues: Phosphate import ATP-binding protein PstB (285 aa).

Residues M22–F262 form the ABC transporter domain. G54–T61 serves as a coordination point for ATP. The segment at R266–Q285 is disordered. Polar residues predominate over residues D272–Q285.

The protein belongs to the ABC transporter superfamily. Phosphate importer (TC 3.A.1.7) family. As to quaternary structure, the complex is composed of two ATP-binding proteins (PstB), two transmembrane proteins (PstC and PstA) and a solute-binding protein (PstS).

It is found in the cell membrane. It catalyses the reaction phosphate(out) + ATP + H2O = ADP + 2 phosphate(in) + H(+). Its function is as follows. Part of the ABC transporter complex PstSACB involved in phosphate import. Responsible for energy coupling to the transport system. This Mycobacterium intracellulare protein is Phosphate import ATP-binding protein PstB.